A 270-amino-acid polypeptide reads, in one-letter code: Orotidine 5'-phosphate decarboxylase (270 aa).

Substrate is bound by residues aspartate 43, 65-67, 96-105, tyrosine 217, and arginine 236; these read KTH and DRKFGDIGST. The active-site Proton donor is the lysine 98.

It belongs to the OMP decarboxylase family.

The catalysed reaction is orotidine 5'-phosphate + H(+) = UMP + CO2. Its pathway is pyrimidine metabolism; UMP biosynthesis via de novo pathway; UMP from orotate: step 2/2. This is Orotidine 5'-phosphate decarboxylase (URA3) from Aureobasidium pullulans (Black yeast).